The primary structure comprises 339 residues: ADP,ATP carrier protein (339 aa).

Solcar repeat units follow at residues 39 to 133 (MAFV…IKGL), 145 to 234 (RFFV…AKGV), and 246 to 328 (AKWA…IKKF). Helical transmembrane passes span 41 to 70 (FVKD…LLLQ), 110 to 134 (LANV…KGLF), 144 to 164 (WRFF…SLLI), 212 to 232 (VSVQ…DTAK), and 245 to 265 (FAKW…SYPF). Residues arginine 115 and lysine 127 each coordinate ADP. Arginine 269 contributes to the ADP binding site. The interval 269–274 (RRRLMM) is important for transport activity. A Nucleotide carrier signature motif motif is present at residues 269–274 (RRRLMM). Residues 305-322 (AWSNVLRGAGGAFVLVLY) traverse the membrane as a helical segment.

This sequence belongs to the mitochondrial carrier (TC 2.A.29) family. As to quaternary structure, monomer.

The protein resides in the mitochondrion inner membrane. It carries out the reaction ADP(in) + ATP(out) = ADP(out) + ATP(in). Its activity is regulated as follows. The matrix-open state (m-state) is inhibited by the membrane-permeable bongkrekic acid (BKA). The cytoplasmic-open state (c-state) is inhibited by the membrane-impermeable toxic inhibitor carboxyatractyloside (CATR). In terms of biological role, ADP:ATP antiporter that mediates import of ADP into the mitochondrial matrix for ATP synthesis, and export of ATP out to fuel the cell. Cycles between the cytoplasmic-open state (c-state) and the matrix-open state (m-state): operates by the alternating access mechanism with a single substrate-binding site intermittently exposed to either the cytosolic (c-state) or matrix (m-state) side of the inner mitochondrial membrane. The protein is ADP,ATP carrier protein of Parachlorella kessleri (Green alga).